Here is a 93-residue protein sequence, read N- to C-terminus: Class I hydrophobin SSP1 (93 aa).

The signal sequence occupies residues 1–26; that stretch reads MKYITAISMLATAALTAATPLNGVEA. 4 cysteine pairs are disulfide-bonded: C39-C71, C47-C65, C48-C56, and C72-C89.

This sequence belongs to the fungal hydrophobin family. Self-assembles to form functional amyloid fibrils called rodlets. Self-assembly into fibrillar rodlets occurs spontaneously at hydrophobic:hydrophilic interfaces and the rodlets further associate laterally to form amphipathic monolayers.

Its subcellular location is the secreted. It localises to the cell wall. In terms of biological role, aerial growth, conidiation, and dispersal of filamentous fungi in the environment rely upon a capability of their secreting small amphipathic proteins called hydrophobins (HPBs) with low sequence identity. Class I can self-assemble into an outermost layer of rodlet bundles on aerial cell surfaces, conferring cellular hydrophobicity that supports fungal growth, development and dispersal; whereas Class II form highly ordered films at water-air interfaces through intermolecular interactions but contribute nothing to the rodlet structure. SSP1 is a class I hydrophobin that acts as an effector in the ericoid mycorrhizal interaction with Vaccinium myrtillus. May enhance attachment of the fungus to the root surface and protect the fungal hypha from plant defense compounds. This is Class I hydrophobin SSP1 from Oidiodendron maius (strain Zn).